The sequence spans 299 residues: 5,10-dihydrophenazine-1-carboxylate 9-dimethylallyltransferase (299 aa).

The protein belongs to the aromatic prenyltransferase family.

It catalyses the reaction 5,10-dihydrophenazine 1-carboxylate + dimethylallyl diphosphate = 5,10-dihydro-9-dimethylallylphenazine 1-carboxylate + diphosphate. It participates in antibiotic biosynthesis; phenazine biosynthesis. With respect to regulation, does not require magnesium or any other divalent metal ions for activity. Its function is as follows. Involved in the biosynthesis of prenylated phenazines. Catalyzes the transfer of a dimethylallyl moiety to C-9 of 5,10-dihydrophenazine 1-carboxylate (dihydro-PCA). Specific for both dimethylallyl diphosphate and dihydro-PCA. The chain is 5,10-dihydrophenazine-1-carboxylate 9-dimethylallyltransferase from Streptomyces anulatus (Streptomyces chrysomallus).